The primary structure comprises 818 residues: LisH domain-containing protein ARMC9 (818 aa).

The LisH domain occupies 7–39; that stretch reads HESELLGLVKEYLDFAEFEDTLKTFSKECKIKG. Positions 204–230 form a coiled coil; sequence QSNKEILQQLHQQLVEAERRSVTYLKR. At serine 582 the chain carries Phosphoserine. 2 disordered regions span residues 642–755 and 790–818; these read VQWS…TTRE and SSCG…SHRK. Positions 701–711 are enriched in low complexity; that stretch reads STPESCVSSSS. Polar residues predominate over residues 792–818; the sequence is CGPQQASRPGSTASSTRGLPSSQSHRK.

Interacts with TOGARAM1, CCDC66, CEP104, CSPP1 and CEP290. Interacts with NDUFAF2. Strongly expressed in most melanomas and melanocytes. Weakly expressed in the testis.

Its subcellular location is the cytoplasm. It localises to the cytoskeleton. It is found in the cilium basal body. The protein resides in the cell projection. The protein localises to the cilium. Its subcellular location is the microtubule organizing center. It localises to the centrosome. It is found in the centriole. Functionally, involved in ciliogenesis. It is required for appropriate acetylation and polyglutamylation of ciliary microtubules, and regulation of cilium length. Acts as a positive regulator of hedgehog (Hh)signaling. May participate in the trafficking and/or retention of GLI2 and GLI3 proteins at the ciliary tip. This is LisH domain-containing protein ARMC9 from Homo sapiens (Human).